The primary structure comprises 711 residues: Early transcription factor 82 kDa subunit (711 aa).

This sequence belongs to the poxviridae VETF large subunit family. Heterodimer of a 70 kDa and a 82 kDa subunit. Part of the early transcription complex composed of ETF, RAP94, and the DNA-directed RNA polymerase.

It is found in the virion. Functionally, acts with RNA polymerase to initiate transcription from early gene promoters. Is recruited by the RPO-associated protein of 94 kDa (RAP94) to form the early transcription complex, which also contains the core RNA polymerase. ETF heterodimer binds to early gene promoters. The sequence is that of Early transcription factor 82 kDa subunit (VETFL) from Oryctolagus cuniculus (Rabbit).